Here is a 449-residue protein sequence, read N- to C-terminus: Probable protoheme IX farnesyltransferase, mitochondrial (449 aa).

Residues Thr-99–Gln-138 are compositionally biased toward low complexity. The disordered stretch occupies residues Thr-99–Lys-140. 7 consecutive transmembrane segments (helical) span residues Leu-163–Leu-183, Met-245–Trp-267, Thr-279–Gly-299, Ala-303–Leu-323, Ser-352–Phe-372, Val-374–Ile-394, and Leu-402–Gln-422.

Belongs to the UbiA prenyltransferase family.

It localises to the mitochondrion membrane. In terms of biological role, converts protoheme IX and farnesyl diphosphate to heme O. This Dictyostelium discoideum (Social amoeba) protein is Probable protoheme IX farnesyltransferase, mitochondrial (cox10).